Here is a 131-residue protein sequence, read N- to C-terminus: PDZ domain-containing protein C52A11.3 (131 aa).

A PDZ domain is found at 51–127 (LVKLQKDANR…RLYLQIARPH (77 aa)).

The polypeptide is PDZ domain-containing protein C52A11.3 (Caenorhabditis elegans).